We begin with the raw amino-acid sequence, 696 residues long: MARDYDLKDYRNIGIMAHIDAGKTTTTERILYHTGKIHKIGETHDGVSQMDWMEQEKERGITITSAATTAYWKNKRINIIDTPGHVDFTVEVERSLRVLDGAVAVLDAQSGVEPQTETVWRQATNYKVPRIVYVNKMDKAGADFEAAVASVKSRLGGNAVAIQWPIGSESNFNGIIDLVTMTATTYNGESAEEEFPMEIPTDLLDVAKAKRQELLEAAANFDEEVMMMVLEGADVDIDTFKNTIRKATLTSEFFPVVCGTSFKNKGVKKMIDAVVDYLPSPLDIPPIKAYLNDQETDVVATDDGEFAALAFKVMTDPFVGSLTFFRVYRGVLEKGSYVYNSTKEQKERIGRILQMHANNRVEIDECRAGDIAAAVGLKFTTTGDTLVGEKSPKVVLEKMVFPEPVISQALEPESKAANEKLSLGLQKLSAEDPTFRTYTDEETGQTIISGMGELHLDIIVDRLKREFGVKVKVGAPQVSYRETITKSAEVEGKHIKQSGGKGQYGHVWLKFEPNHDQGFEFIDKIVGGKIPKEYIKPIQKGLEEKMAVGILAGYPMIDVKATLFDGSYHDVDSSELAYKIAASKALTKAKDLIGTVLLEPIMDVSVVVPSDHMGDVIGDLSRRRGLISDQEQRNDGAVIVRAKVPLSEMFGYSTELRSMTSGRGTYQMQFDHYEKCPKNISDEIIKKRNIQNKDEE.

The region spanning 8 to 282 (KDYRNIGIMA…AVVDYLPSPL (275 aa)) is the tr-type G domain. Residues 17-24 (AHIDAGKT), 81-85 (DTPGH), and 135-138 (NKMD) each bind GTP.

Belongs to the TRAFAC class translation factor GTPase superfamily. Classic translation factor GTPase family. EF-G/EF-2 subfamily.

It is found in the cytoplasm. Catalyzes the GTP-dependent ribosomal translocation step during translation elongation. During this step, the ribosome changes from the pre-translocational (PRE) to the post-translocational (POST) state as the newly formed A-site-bound peptidyl-tRNA and P-site-bound deacylated tRNA move to the P and E sites, respectively. Catalyzes the coordinated movement of the two tRNA molecules, the mRNA and conformational changes in the ribosome. The polypeptide is Elongation factor G (Mycoplasmopsis synoviae (strain 53) (Mycoplasma synoviae)).